Consider the following 252-residue polypeptide: Phosphate import ATP-binding protein PstB (252 aa).

The 243-residue stretch at 5–247 (VKIDKLNVHF…PEKKQTEDYI (243 aa)) folds into the ABC transporter domain. 37–44 (GPSGCGKS) contributes to the ATP binding site.

It belongs to the ABC transporter superfamily. Phosphate importer (TC 3.A.1.7) family. As to quaternary structure, the complex is composed of two ATP-binding proteins (PstB), two transmembrane proteins (PstC and PstA) and a solute-binding protein (PstS).

The protein localises to the cell inner membrane. The catalysed reaction is phosphate(out) + ATP + H2O = ADP + 2 phosphate(in) + H(+). Its function is as follows. Part of the ABC transporter complex PstSACB involved in phosphate import. Responsible for energy coupling to the transport system. In Geobacter metallireducens (strain ATCC 53774 / DSM 7210 / GS-15), this protein is Phosphate import ATP-binding protein PstB.